The chain runs to 365 residues: Class I histocompatibility antigen, Gogo-A*0401 alpha chain (365 aa).

The N-terminal stretch at 1–24 (MAVMAPRTLVLLLSGALALTQTWA) is a signal peptide. Residues 25-114 (GSHSMRYFYT…LRGYYNQSED (90 aa)) are alpha-1. Over 25–308 (GSHSMRYFYT…EPSSQPTIPI (284 aa)) the chain is Extracellular. Residue N110 is glycosylated (N-linked (GlcNAc...) asparagine). The interval 115 to 206 (GSHTIQRMYG…ENGKETLQLT (92 aa)) is alpha-2. Disulfide bonds link C125–C188 and C227–C283. Positions 207–298 (DAPKTHMTHH…GLPKPLTLRW (92 aa)) are alpha-3. The Ig-like C1-type domain occupies 209 to 295 (PKTHMTHHPV…QHEGLPKPLT (87 aa)). The tract at residues 299-308 (EPSSQPTIPI) is connecting peptide. A helical membrane pass occupies residues 309-332 (VGIIAGLVLFGAVIAGAVVAAVRW). The Cytoplasmic portion of the chain corresponds to 333 to 365 (RRKSSDRKGGSYSQAASSDSAQGSDVSLTACKV). A disordered region spans residues 338 to 365 (DRKGGSYSQAASSDSAQGSDVSLTACKV). Residues 342–359 (GSYSQAASSDSAQGSDVS) show a composition bias toward low complexity. At S343 the chain carries Phosphoserine. Y344 carries the post-translational modification Phosphotyrosine. 6 positions are modified to phosphoserine: S345, S349, S350, S352, S356, and S359.

Belongs to the MHC class I family. In terms of assembly, heterodimer of an alpha chain and a beta chain (beta-2-microglobulin).

It is found in the membrane. Functionally, involved in the presentation of foreign antigens to the immune system. The polypeptide is Class I histocompatibility antigen, Gogo-A*0401 alpha chain (Gorilla gorilla gorilla (Western lowland gorilla)).